We begin with the raw amino-acid sequence, 374 residues long: Eukaryotic translation initiation factor 3 subunit M (374 aa).

N-acetylserine is present on serine 2. Serine 2 and serine 152 each carry phosphoserine. Positions alanine 180 to histidine 339 constitute a PCI domain. Lysine 254 bears the N6-acetyllysine mark. Serine 367 carries the phosphoserine modification.

This sequence belongs to the eIF-3 subunit M family. Component of the eukaryotic translation initiation factor 3 (eIF-3) complex, which is composed of 13 subunits: EIF3A, EIF3B, EIF3C, EIF3D, EIF3E, EIF3F, EIF3G, EIF3H, EIF3I, EIF3J, EIF3K, EIF3L and EIF3M. The eIF-3 complex appears to include 3 stable modules: module A is composed of EIF3A, EIF3B, EIF3G and EIF3I; module B is composed of EIF3F, EIF3H, and EIF3M; and module C is composed of EIF3C, EIF3D, EIF3E, EIF3K and EIF3L. EIF3C of module C binds EIF3B of module A and EIF3H of module B, thereby linking the three modules. EIF3J is a labile subunit that binds to the eIF-3 complex via EIF3B. The eIF-3 complex interacts with RPS6KB1 under conditions of nutrient depletion. Mitogenic stimulation leads to binding and activation of a complex composed of MTOR and RPTOR, leading to phosphorylation and release of RPS6KB1 and binding of EIF4B to eIF-3.

It localises to the cytoplasm. In terms of biological role, component of the eukaryotic translation initiation factor 3 (eIF-3) complex, which is required for several steps in the initiation of protein synthesis. The eIF-3 complex associates with the 40S ribosome and facilitates the recruitment of eIF-1, eIF-1A, eIF-2:GTP:methionyl-tRNAi and eIF-5 to form the 43S pre-initiation complex (43S PIC). The eIF-3 complex stimulates mRNA recruitment to the 43S PIC and scanning of the mRNA for AUG recognition. The eIF-3 complex is also required for disassembly and recycling of post-termination ribosomal complexes and subsequently prevents premature joining of the 40S and 60S ribosomal subunits prior to initiation. The eIF-3 complex specifically targets and initiates translation of a subset of mRNAs involved in cell proliferation, including cell cycling, differentiation and apoptosis, and uses different modes of RNA stem-loop binding to exert either translational activation or repression. This chain is Eukaryotic translation initiation factor 3 subunit M, found in Pongo abelii (Sumatran orangutan).